A 645-amino-acid polypeptide reads, in one-letter code: Sodium-dependent phosphate transporter 2 (645 aa).

Residues 1–5 are Extracellular-facing; that stretch reads MAMDE. The chain crosses the membrane as a helical span at residues 6 to 26; it reads YLWMVILGFIIAFILAFSVGA. The Cytoplasmic segment spans residues 27–46; the sequence is NDVANSFGTAVGSGVVTLRQ. Residues 47-67 traverse the membrane as a helical segment; it reads ACILASIFETTGSVLLGAKVG. Topologically, residues 68-86 are extracellular; sequence ETIRKGIIDVNLYNNTVET. Residue Asn81 is glycosylated (N-linked (GlcNAc...) asparagine). Residues 87-107 form a helical membrane-spanning segment; sequence LMAGEVSAMVGSAVWQLIASF. The Cytoplasmic portion of the chain corresponds to 108-109; it reads LR. The chain crosses the membrane as a helical span at residues 110 to 130; the sequence is FPISGTHCIVGATIGFSLVAI. Residues 131–142 lie on the Extracellular side of the membrane; the sequence is GTQGVQWMELVK. The chain crosses the membrane as a helical span at residues 143 to 163; it reads IVASWFISPLLSGFMSGVLFV. At 164–190 the chain is on the cytoplasmic side; the sequence is LIRMFILKKEDPVPNGLRALPVFYAAT. A helical transmembrane segment spans residues 191–211; the sequence is IAINVFSIMYTGAPVMGLVLP. At 212 to 213 the chain is on the extracellular side; the sequence is MW. Residues 214-234 traverse the membrane as a helical segment; it reads AIALISFGVALLFALFVWLFV. Topologically, residues 235 to 475 are cytoplasmic; it reads CPWMRRKITG…EEKEEKDSPE (241 aa). Residues Ser253, Ser256, Ser259, Ser268, Ser316, and Ser379 each carry the phosphoserine modification. Residues 275–320 form a disordered region; it reads PGAKAHDDSTVPLTGSAADPSGTSESMSGGHHPRAPYGRALSMTHG. The segment at 448–471 is disordered; sequence RLAPPLAEPEPPRDDPADEEKEEK. The chain crosses the membrane as a helical span at residues 476–496; it reads VHLLFHFLQVLTACFGSFAHG. Residues 497–523 are Extracellular-facing; the sequence is GNDVSNAIGPLVALWLIYEQGAVLQEA. Residues 524–544 traverse the membrane as a helical segment; it reads ATPVWLLFYGGVGICTGLWVW. Residues 545-564 lie on the Cytoplasmic side of the membrane; that stretch reads GRRVIQTMGKDLTPITPSSG. The helical transmembrane segment at 565–579 threads the bilayer; that stretch reads FTIELASAFTVVIAS. Topologically, residues 580-586 are extracellular; it reads NIGLPVS. The helical transmembrane segment at 587–602 threads the bilayer; that stretch reads TTHCKVGSVVAVGWIR. Topologically, residues 603–614 are cytoplasmic; the sequence is SRKAVDWRLFRN. A helical transmembrane segment spans residues 615–635; the sequence is IFVAWFVTVPVAGLFSAAIMA. At 636 to 645 the chain is on the extracellular side; that stretch reads LLIHGILPFV.

Belongs to the inorganic phosphate transporter (PiT) (TC 2.A.20) family. As to quaternary structure, homodimer.

Its subcellular location is the cell membrane. It localises to the apical cell membrane. The catalysed reaction is 2 Na(+)(out) + phosphate(out) = 2 Na(+)(in) + phosphate(in). Sodium-phosphate symporter which preferentially transports the monovalent form of phosphate with a stoichiometry of two sodium ions per phosphate ion. Plays a critical role in the determination of bone quality and strength by providing phosphate for bone mineralization. Required to maintain normal cerebrospinal fluid phosphate levels. Mediates phosphate-induced calcification of vascular smooth muscle cells (VCMCs) and can functionally compensate for loss of SLC20A1 in VCMCs. The sequence is that of Sodium-dependent phosphate transporter 2 (SLC20A2) from Bos taurus (Bovine).